Reading from the N-terminus, the 888-residue chain is Endochitinase A1 (888 aa).

A signal peptide spans 1–22; the sequence is MVSSKLSFVATAVAALAPLASA. The 310-residue stretch at 29–338 folds into the GH18 domain; sequence SNLAIYWGQG…DHMKDILLHC (310 aa). Glu174 acts as the Proton donor in catalysis. 3 disordered regions span residues 338–631, 743–799, and 813–855; these read CDPS…TTTA, PVTE…VSTS, and PLIL…YTQE. Low complexity predominate over residues 344-617; the sequence is VTSSSAIPSS…STDESSTTVG (274 aa). A glycan (N-linked (GlcNAc...) asparagine) is linked at Asn622. A compositionally biased stretch (polar residues) spans 764–775; it reads EGSNPTQPSGAS. A glycan (N-linked (GlcNAc...) asparagine) is linked at Asn780. A compositionally biased stretch (polar residues) spans 835 to 855; it reads PSGQNSGSSSHVPIPPSYTQE. A lipid anchor (GPI-anchor amidated glycine) is attached at Gly863. The propeptide at 864–888 is removed in mature form; the sequence is AASRVTGLGHGLVLTVLTLSAFFVL.

This sequence belongs to the glycosyl hydrolase 18 family. Chitinase class III subfamily.

The protein localises to the cell membrane. Its subcellular location is the secreted. It localises to the cell wall. The enzyme catalyses Random endo-hydrolysis of N-acetyl-beta-D-glucosaminide (1-&gt;4)-beta-linkages in chitin and chitodextrins.. The cyclic peptide natural product argifin acts as a specific inhibitor. Functionally, GPI-anchored chitinase involved in the degradation of chitin, a component of the cell walls of fungi and exoskeletal elements of some animals (including worms and arthropods). Required to reshape the cell wall at the sites where cell wall remodeling and/or cell wall maturation actively take place such as sites of conidia formation. The sequence is that of Endochitinase A1 (chiA1) from Aspergillus fumigatus (strain ATCC MYA-4609 / CBS 101355 / FGSC A1100 / Af293) (Neosartorya fumigata).